The chain runs to 299 residues: Streptogrisin-B (299 aa).

The N-terminal stretch at 1-38 is a signal peptide; it reads MRIKRTSNRSNAARRVRTTAVLAGLAAVAALAVPTANA. Residues 39–114 constitute a propeptide that is removed on maturation; sequence ETPRTFSANQ…ERTPGKFTKL (76 aa). Cys128 and Cys148 are disulfide-bonded. Residues His147, Asp177, and Ser255 each act as charge relay system in the active site. An intrachain disulfide couples Cys249 to Cys276.

This sequence belongs to the peptidase S1 family. In terms of assembly, monomer.

The enzyme catalyses Hydrolysis of proteins with trypsin-like specificity.. In terms of biological role, has a primary specificity for large aliphatic or aromatic amino acids. The protein is Streptogrisin-B (sprB) of Streptomyces griseus.